A 193-amino-acid polypeptide reads, in one-letter code: Thymidine kinase (193 aa).

Residues 9–16 (ASMNAGKS) and 87–90 (DEAQ) contribute to the ATP site. Glu-88 serves as the catalytic Proton acceptor. Zn(2+) is bound by residues Cys-145, Cys-147, Cys-182, and His-185.

Belongs to the thymidine kinase family. As to quaternary structure, homotetramer.

It localises to the cytoplasm. The enzyme catalyses thymidine + ATP = dTMP + ADP + H(+). The protein is Thymidine kinase of Zymomonas mobilis subsp. mobilis (strain ATCC 31821 / ZM4 / CP4).